A 192-amino-acid polypeptide reads, in one-letter code: Phosphoheptose isomerase (192 aa).

The region spanning Leu-37–Lys-192 is the SIS domain. Position 52 to 54 (Asn-52 to Gly-54) interacts with substrate. Residues His-61 and Glu-65 each coordinate Zn(2+). Substrate-binding positions include Glu-65, Asn-93–Asp-94, Ser-119–Ser-121, Ser-124, and Gln-172. 2 residues coordinate Zn(2+): Gln-172 and His-180.

Belongs to the SIS family. GmhA subfamily. As to quaternary structure, homotetramer. Requires Zn(2+) as cofactor.

Its subcellular location is the cytoplasm. The enzyme catalyses 2 D-sedoheptulose 7-phosphate = D-glycero-alpha-D-manno-heptose 7-phosphate + D-glycero-beta-D-manno-heptose 7-phosphate. The protein operates within carbohydrate biosynthesis; D-glycero-D-manno-heptose 7-phosphate biosynthesis; D-glycero-alpha-D-manno-heptose 7-phosphate and D-glycero-beta-D-manno-heptose 7-phosphate from sedoheptulose 7-phosphate: step 1/1. Catalyzes the isomerization of sedoheptulose 7-phosphate in D-glycero-D-manno-heptose 7-phosphate. This is Phosphoheptose isomerase from Escherichia fergusonii (strain ATCC 35469 / DSM 13698 / CCUG 18766 / IAM 14443 / JCM 21226 / LMG 7866 / NBRC 102419 / NCTC 12128 / CDC 0568-73).